We begin with the raw amino-acid sequence, 206 residues long: MKESVQEIIQQLIHSVDLQSSKFQLAIVCTMFNPIFWNIVARMEYHKHSLTKMCGGARKGCYMLAATIFSLGIVRDMVYESALREQPTCSLITGENWTKLGVALFGLGQVLVLSSMYKLGITGTYLGDYFGILMDERVTGFPFNVSNNPMYQGSTLSFLGIALYKGKPAGLVVSAVVYFMYKIALRWEEPFTAMIYANRDKAKKNM.

Residues 1 to 20 (MKESVQEIIQQLIHSVDLQS) are Lumenal-facing. Positions 21–41 (SKFQLAIVCTMFNPIFWNIVA) form an intramembrane region, helical. Residues 42 to 53 (RMEYHKHSLTKM) lie on the Lumenal side of the membrane. The chain crosses the membrane as a helical span at residues 54 to 74 (CGGARKGCYMLAATIFSLGIV). The Cytoplasmic segment spans residues 75-101 (RDMVYESALREQPTCSLITGENWTKLG). Residues 102 to 122 (VALFGLGQVLVLSSMYKLGIT) form a helical membrane-spanning segment. 106-108 (GLG) serves as a coordination point for S-adenosyl-L-methionine. Over 123–165 (GTYLGDYFGILMDERVTGFPFNVSNNPMYQGSTLSFLGIALYK) the chain is Lumenal. The helical transmembrane segment at 166–186 (GKPAGLVVSAVVYFMYKIALR) threads the bilayer. Residues 187–206 (WEEPFTAMIYANRDKAKKNM) lie on the Cytoplasmic side of the membrane. Position 188–189 (188–189 (EE)) interacts with S-adenosyl-L-methionine.

Belongs to the class VI-like SAM-binding methyltransferase superfamily. PEMT/PEM2 methyltransferase family.

The protein localises to the endoplasmic reticulum membrane. It is found in the mitochondrion membrane. It carries out the reaction a 1,2-diacyl-sn-glycero-3-phosphoethanolamine + S-adenosyl-L-methionine = a 1,2-diacyl-sn-glycero-3-phospho-N-methylethanolamine + S-adenosyl-L-homocysteine + H(+). The enzyme catalyses a 1,2-diacyl-sn-glycero-3-phospho-N-methylethanolamine + S-adenosyl-L-methionine = a 1,2-diacyl-sn-glycero-3-phospho-N,N-dimethylethanolamine + S-adenosyl-L-homocysteine + H(+). It catalyses the reaction a 1,2-diacyl-sn-glycero-3-phospho-N,N-dimethylethanolamine + S-adenosyl-L-methionine = a 1,2-diacyl-sn-glycero-3-phosphocholine + S-adenosyl-L-homocysteine + H(+). The protein operates within phospholipid metabolism; phosphatidylcholine biosynthesis. Functionally, catalyzes the second two steps of the methylation pathway of phosphatidylcholine biosynthesis, the SAM-dependent methylation of phosphatidylmonomethylethanolamine (PMME) to phosphatidyldimethylethanolamine (PDME) and of PDME to phosphatidylcholine (PC). Can also catalyze the first methylation reaction of PE to PMME in the absence of PE methyltransferase CHO2. In Saccharomyces cerevisiae (strain ATCC 204508 / S288c) (Baker's yeast), this protein is Phosphatidyl-N-methylethanolamine N-methyltransferase.